The chain runs to 551 residues: Glucans biosynthesis protein D (551 aa).

A signal peptide (tat-type signal) is located at residues 1–32 (MDRRRFIKGSMAMAAVCGTSGIASLFSQAAFA).

It belongs to the OpgD/OpgG family. Post-translationally, predicted to be exported by the Tat system. The position of the signal peptide cleavage has not been experimentally proven.

Its subcellular location is the periplasm. Its pathway is glycan metabolism; osmoregulated periplasmic glucan (OPG) biosynthesis. Its function is as follows. Probably involved in the control of the structural glucose backbone of osmoregulated periplasmic glucans (OPGs). This is Glucans biosynthesis protein D from Escherichia coli O9:H4 (strain HS).